The primary structure comprises 685 residues: N(6)-adenosine-methyltransferase MT-A70-like (685 aa).

S-adenosyl-L-methionine contacts are provided by residues 464 to 465 and Asp482; that span reads DI. The positively charged region required for RNA-binding stretch occupies residues 552–565; it reads RIIRTGRTGHWLNH. S-adenosyl-L-methionine is bound by residues Lys599, 622-625, and 635-636; these read RMHN and NQ. The disordered stretch occupies residues 657–685; the sequence is EIDVQPPSPPRASAMETDNEPMAIDSITA. A Phosphoserine modification is found at Ser664.

Belongs to the MT-A70-like family. In terms of assembly, interacts with FIP37. Interacts with MTB. Associates with MTB, FIP37, VIR and HAKAI to form the m6A writer complex which is essential for adenosine methylation at specific mRNA sequences.

The protein resides in the nucleus. The catalysed reaction is an adenosine in mRNA + S-adenosyl-L-methionine = an N(6)-methyladenosine in mRNA + S-adenosyl-L-homocysteine + H(+). In terms of biological role, catalytic subunit of the N6-methyltransferase complex, a multiprotein complex that mediates N6-methyladenosine (m6A) methylation at the 5'-[AG]GAC-3' consensus sites of some mRNAs. Associates with MTB, FIP37, VIR and HAKAI to form the m6A writer complex which is essential for adenosine methylation at specific mRNA sequences. N6-methyladenosine (m6A) plays a role in mRNA stability, processing, translation efficiency and editing. This chain is N(6)-adenosine-methyltransferase MT-A70-like, found in Arabidopsis thaliana (Mouse-ear cress).